The sequence spans 132 residues: Histone H2A.2 (132 aa).

Residue Ser2 is modified to N-acetylserine. An N6-acetyllysine mark is found at Lys5 and Lys8. N6-succinyllysine is present on residues Lys14 and Lys22. Gln106 bears the N5-methylglutamine mark. Lys120 bears the N6-malonyllysine mark. A Glycyl lysine isopeptide (Lys-Gly) (interchain with G-Cter in SUMO) cross-link involves residue Lys127. Residue Ser129 is modified to Phosphoserine. Residues 129–130 (SQ) carry the [ST]-Q motif motif.

This sequence belongs to the histone H2A family. The nucleosome is a histone octamer containing two molecules each of H2A, H2B, H3 and H4 assembled in one H3-H4 heterotetramer and two H2A-H2B heterodimers. The octamer wraps approximately 147 bp of DNA. Interacts with NAP1. In terms of processing, phosphorylated to form H2AS128ph (gamma-H2A) in response to DNA double-strand breaks (DSBs) generated by exogenous genotoxic agents and by stalled replication forks. Phosphorylation is dependent on the DNA damage checkpoint kinases MEC1/ATR and TEL1/ATM, spreads on either side of a detected DSB site and may mark the surrounding chromatin for recruitment of proteins required for DNA damage signaling and repair. Gamma-H2A interacts with ARP4, a shared component of the NuA4 histone acetyltransferase complex and the INO80 and SWR1 chromatin remodeling complexes, and serves to recruit first NuA4, mediating histone H4 acetylation, and subsequently the INO80/SWR1 complexes, facilitating DNA resection, to DSB sites. Gamma-H2A is required for sequestering cohesin around the break site, which is important for efficient post-replicative double-strand break repair by homologous recombination, holding the damaged chromatid close to its undamaged sister template. Gamma-H2A is removed from the DNA prior to the strand invasion-primer extension step of the repair process and subsequently dephosphorylated by PPH3, a component of the histone H2A phosphatase complex (HTP-C). Dephosphorylation is necessary for efficient recovery from the DNA damage checkpoint. Post-translationally, N-acetylated by NAT4. Acetylated by ESA1, a component of the NuA4 histone acetyltransferase (HAT) complex, to form H2AK4ac and H2AK7ac. In terms of processing, glutamine methylation at Gln-106 (H2AQ105me) by NOP1 is specifically dedicated to polymerase I. It is present at 35S ribosomal DNA locus and impairs binding of the FACT complex. Post-translationally, sumoylated to from H2AK126su. May lead to transcriptional repression.

The protein localises to the nucleus. It localises to the chromosome. Core component of nucleosome which plays a central role in DNA double strand break (DSB) repair. Nucleosomes wrap and compact DNA into chromatin, limiting DNA accessibility to the cellular machineries which require DNA as a template. Histones thereby play a central role in transcription regulation, DNA repair, DNA replication and chromosomal stability. DNA accessibility is regulated via a complex set of post-translational modifications of histones, also called histone code, and nucleosome remodeling. The chain is Histone H2A.2 (HTA2) from Saccharomyces cerevisiae (strain ATCC 204508 / S288c) (Baker's yeast).